The following is a 670-amino-acid chain: Methionine--tRNA ligase (670 aa).

The 'HIGH' region motif lies at 14 to 24 (PYANGHLHLGH). Cys145, Cys148, Cys158, and Cys161 together coordinate Zn(2+). Positions 330–334 (KMSKS) match the 'KMSKS' region motif. Lys333 serves as a coordination point for ATP. Residues 570–670 (DFAKVDLRIA…AGALPGMKVK (101 aa)) form the tRNA-binding domain.

This sequence belongs to the class-I aminoacyl-tRNA synthetase family. MetG type 1 subfamily. Homodimer. The cofactor is Zn(2+).

Its subcellular location is the cytoplasm. The catalysed reaction is tRNA(Met) + L-methionine + ATP = L-methionyl-tRNA(Met) + AMP + diphosphate. Functionally, is required not only for elongation of protein synthesis but also for the initiation of all mRNA translation through initiator tRNA(fMet) aminoacylation. The protein is Methionine--tRNA ligase of Legionella pneumophila (strain Paris).